The primary structure comprises 598 residues: IQ calmodulin-binding motif-containing protein 1 (598 aa).

Positions 1 to 157 (MKPTGTDPRI…SLFWLLGGHV (157 aa)) are interaction with BBS1, BBS8 and BBS9. The interval 287 to 598 (QEVEEQKLHQ…NLFIGGTKPP (312 aa)) is interaction with CEP290, BBS1, BBS2, BBS4, BBS5, BBS7, BBS8 and BBS9. IQ domains follow at residues 294–317 (LHQA…LKKL), 318–338 (PSAV…MLLE), 387–416 (EEKS…SLIE), and 417–437 (YKAA…CRKK). The stretch at 336–373 (LLEINRQKEEEDLKLQLQLQRQRAMRLSRELQLSMLEI) forms a coiled coil. The interaction with BBS1, BBS2, BBS4, BBS7, BBS8 and BBS9 stretch occupies residues 530–598 (AEGKEPELFL…NLFIGGTKPP (69 aa)). Ser572 carries the post-translational modification Phosphoserine.

Interacts with CEP290/NPHP6; IQCB1/NPHP5 and CEP290 are proposed to form a functional NPHP5-6 module/NPHP6; localized to the centrosome. Interacts with calmodulin, ATXN10. Interacts with NPHP1, INVS, NPHP4 and RPGRIP1L; these interactions likely require additional interactors. Associates with the BBSome complex; interacts with BBS1, BBS2, BBS4, BBS5, BBS7, BBS8 and BBS9. As to expression, ubiquitously expressed in fetal and adult tissues. Localized to the outer segments and connecting cilia of photoreceptor cells. Up-regulated in a number of primary colorectal and gastric tumors.

It is found in the cytoplasm. It localises to the cytoskeleton. Its subcellular location is the microtubule organizing center. The protein localises to the centrosome. The protein resides in the centriole. Functionally, involved in ciliogenesis. The function in an early step in cilia formation depends on its association with CEP290/NPHP6. Involved in regulation of the BBSome complex integrity, specifically for presence of BBS2 and BBS5 in the complex, and in ciliary targeting of selected BBSome cargos. May play a role in controlling entry of the BBSome complex to cilia possibly implicating CEP290/NPHP6. In Homo sapiens (Human), this protein is IQ calmodulin-binding motif-containing protein 1 (IQCB1).